The chain runs to 266 residues: Tryptophan synthase alpha chain (266 aa).

Catalysis depends on proton acceptor residues Glu-50 and Asp-61.

Belongs to the TrpA family. Tetramer of two alpha and two beta chains.

The catalysed reaction is (1S,2R)-1-C-(indol-3-yl)glycerol 3-phosphate + L-serine = D-glyceraldehyde 3-phosphate + L-tryptophan + H2O. It functions in the pathway amino-acid biosynthesis; L-tryptophan biosynthesis; L-tryptophan from chorismate: step 5/5. Its function is as follows. The alpha subunit is responsible for the aldol cleavage of indoleglycerol phosphate to indole and glyceraldehyde 3-phosphate. The sequence is that of Tryptophan synthase alpha chain from Alkaliphilus metalliredigens (strain QYMF).